The sequence spans 476 residues: Serine/threonine-protein kinase Chk1 (476 aa).

Positions 9–265 constitute a Protein kinase domain; it reads WDLVQTLGEG…IPDIKKDRWY (257 aa). Residues 15 to 23 and Lys-38 contribute to the ATP site; that span reads LGEGAYGEV. The active-site Proton acceptor is the Asp-130. The disordered stretch occupies residues 272–329; that stretch reads GTKRGRVSSGGVTESPGALPKHIRSDTDFSPVKSALGEDKASYSTSQPEPGTGGALWD. Ser-280 carries the post-translational modification Phosphoserine; by PKB/AKT1. Ser-296 carries the phosphoserine modification. The residue at position 317 (Ser-317) is a Phosphoserine; by ATM and ATR. Phosphoserine is present on Ser-345. The tract at residues 391 to 476 is autoinhibitory region; the sequence is RSLRDVCEKM…STQKVWLPPP (86 aa).

This sequence belongs to the protein kinase superfamily. CAMK Ser/Thr protein kinase family. NIM1 subfamily. In terms of processing, phosphorylated by ATR in a RAD17-dependent manner in response to ultraviolet irradiation and inhibition of DNA replication. Phosphorylated by ATM in response to ionizing irradiation. Phosphorylation at Ser-345 induces a change in the conformation of the protein and activates the kinase activity. Phosphorylation at Ser-345 also increases binding to 14-3-3 proteins and promotes nuclear retention.

It localises to the nucleus. Its subcellular location is the chromosome. The protein resides in the cytoplasm. It is found in the cytoskeleton. The protein localises to the microtubule organizing center. It localises to the centrosome. It carries out the reaction L-seryl-[protein] + ATP = O-phospho-L-seryl-[protein] + ADP + H(+). The enzyme catalyses L-threonyl-[protein] + ATP = O-phospho-L-threonyl-[protein] + ADP + H(+). Activated through phosphorylation by atr or atm in response to DNA damage or inhibition of DNA replication. In terms of biological role, serine/threonine-protein kinase which is required for checkpoint-mediated cell cycle arrest and activation of DNA repair in response to the presence of DNA damage or unreplicated DNA. May also negatively regulate cell cycle progression during unperturbed cell cycles. This regulation is achieved by a number of mechanisms that together help to preserve the integrity of the genome. Recognizes the substrate consensus sequence [R-X-X-S/T]. Binds to and phosphorylates CDC25A, CDC25B and CDC25C. This inhibits their activity through proteasomal degradation, nucleo-cytoplasmic shuttling and inhibition by proteins of the 13-3-3 family. Inhibition of CDC25 leads to increased inhibitory tyrosine phosphorylation of CDK-cyclin complexes and blocks cell cycle progression. May promote DNA repair, regulate chromatin assembly and the transcription of genes that regulate cell-cycle progression. May also play a role in replication fork maintenance. The protein is Serine/threonine-protein kinase Chk1 (CHEK1) of Gallus gallus (Chicken).